Reading from the N-terminus, the 944-residue chain is ATP-dependent RNA helicase DDX42 (944 aa).

The segment covering 1-18 (MNWNKGGPGTKRGFGFGG) has biased composition (gly residues). Disordered stretches follow at residues 1-119 (MNWN…LEAF), 131-155 (MKRLEDKDKEKKNAKGIRDDIEEED), and 182-203 (EYDSDGNPIAPSKKIIDPLPPI). Residues 35-52 (SHSAFGTAGSSAAFAKSG) show a composition bias toward low complexity. Positions 70-84 (DEENAYFEDEEEDNS) are enriched in acidic residues. A coiled-coil region spans residues 120–157 (MAEVEDQAARDMKRLEDKDKEKKNAKGIRDDIEEEDDQ). Positions 131–149 (MKRLEDKDKEKKNAKGIRD) are enriched in basic and acidic residues. Positions 253-281 (SSFARFGFDEQLMHQIRKSEYTQPTPIQC) match the Q motif motif. The 176-residue stretch at 284-459 (VPVAMSGRDM…RDILIDPIRV (176 aa)) folds into the Helicase ATP-binding domain. Position 297 to 304 (297 to 304 (AKTGSGKT)) interacts with ATP. Residues 407–410 (DEAD) carry the DEAD box motif. In terms of domain architecture, Helicase C-terminal spans 487-632 (WLTRRLVEFT…HVSKELLDLA (146 aa)). 3 disordered regions span residues 642–682 (RFKG…VMSN), 723–753 (GSSAAGASGWTSAGSLNSVPTSSAQQNAANP), and 794–944 (SANA…RWDS). The segment covering 723–737 (GSSAAGASGWTSAGS) has biased composition (low complexity). Positions 738–752 (LNSVPTSSAQQNAAN) are enriched in polar residues. Over residues 794–814 (SANASAGNREGVGSAGSAPRG) the composition is skewed to low complexity. The segment covering 815 to 824 (GSSGGGGGGI) has biased composition (gly residues). Composition is skewed to basic and acidic residues over residues 825–887 (VRER…RHFT) and 901–926 (NISEGRSNESRNGENRKDANSRDNKT).

It belongs to the DEAD box helicase family. DDX42 subfamily. As to quaternary structure, transient component of the SF3B subcomplex of the 17S U2 SnRNP complex.

Its subcellular location is the cytoplasm. The protein localises to the nucleus. The enzyme catalyses ATP + H2O = ADP + phosphate + H(+). ATP-dependent RNA helicase that binds to partially double-stranded RNAs (dsRNAs) in order to unwind RNA secondary structures. Unwinding is promoted in the presence of single-strand binding proteins. Also mediates RNA duplex formation thereby displacing the single-strand RNA binding protein. ATP and ADP modulate its activity: ATP binding and hydrolysis by DDX42 triggers RNA strand separation, whereas the ADP-bound form of the protein triggers annealing of complementary RNA strands. Required for assembly of the 17S U2 SnRNP complex of the spliceosome, a large ribonucleoprotein complex that removes introns from transcribed pre-mRNAs: DDX42 associates transiently with the SF3B subcomplex of the 17S U2 SnRNP complex and is released after fulfilling its role in the assembly of 17S U2 SnRNP. The protein is ATP-dependent RNA helicase DDX42 (DDX42) of Gallus gallus (Chicken).